Reading from the N-terminus, the 402-residue chain is Hyaluronan and proteoglycan link protein 4 (402 aa).

Residues 1 to 29 (MVCARAALGPGALWAAAWGVLLLTAPAGA) form the signal peptide. The 116-residue stretch at 46–161 (SVVVQTAPGQ…DAGMVKLDLE (116 aa)) folds into the Ig-like C2-type domain. 5 disulfide bridges follow: Cys68–Cys143, Cys185–Cys266, Cys209–Cys230, Cys293–Cys363, and Cys318–Cys339. Residue Asn132 is glycosylated (N-linked (GlcNAc...) asparagine). Link domains follow at residues 163–268 (VVFP…FCFT) and 273–365 (GRVF…YCYR).

It belongs to the HAPLN family. In terms of tissue distribution, expressed predominantly in brain.

Its subcellular location is the secreted. The protein resides in the extracellular space. The protein localises to the extracellular matrix. Essential for the proper localization of brevican (BCAN), mainly as a perineuronal nets (PNNs)-type deposition in the brainstem and cerebellum thereby playing a key role in the formation and structural organization of PNNs. Contributes to the formation and transmission of inhibitory GABAergic synapses between Purkinje cells and deep cerebellar nuclei neurons. This is Hyaluronan and proteoglycan link protein 4 (HAPLN4) from Homo sapiens (Human).